The following is a 208-amino-acid chain: Redox-sensing transcriptional repressor Rex (208 aa).

Residues 18 to 57 constitute a DNA-binding region (H-T-H motif); it reads IYYRYFKLLETDGIERIKSEQLAKLVAIPSATIRRDFSYI. Residue 92–97 participates in NAD(+) binding; it reads GVGNLG.

It belongs to the transcriptional regulatory Rex family. As to quaternary structure, homodimer.

The protein localises to the cytoplasm. In terms of biological role, modulates transcription in response to changes in cellular NADH/NAD(+) redox state. The polypeptide is Redox-sensing transcriptional repressor Rex (Latilactobacillus sakei subsp. sakei (strain 23K) (Lactobacillus sakei subsp. sakei)).